A 776-amino-acid chain; its full sequence is FT-interacting protein 4 (776 aa).

Over residues 1–16 (MQRPPPEDFSLKETKP) the composition is skewed to basic and acidic residues. Residues 1–23 (MQRPPPEDFSLKETKPHLGGGKV) are disordered. C2 domains follow at residues 22–142 (KVTG…PQWY), 181–305 (VSGT…SRWF), and 346–474 (YSSD…THSY). Ca(2+) contacts are provided by Asp-55, Asp-61, Asp-108, Asp-110, and Asp-115. 3 helical membrane-spanning segments follow: residues 577–597 (IMGV…ICVW), 608–628 (ILFI…FLYL), and 719–739 (LFVL…FQVV).

It belongs to the MCTP family. As to quaternary structure, interacts with and regulates subcellular localization and trafficking of STM. Requires Ca(2+) as cofactor. In terms of tissue distribution, highly expressed in both vegetative and inflorescence shoot apical meristems (SAMs). Accumulates in root meristems. Observed in flowers.

The protein resides in the endoplasmic reticulum membrane. The protein localises to the cytoplasm. Its subcellular location is the vesicle. It localises to the cell membrane. It is found in the endosome membrane. The protein resides in the golgi apparatus membrane. Its function is as follows. Required for proliferation and differentiation of shoot stem cells in the shoot apical meristem (SAM), thus determining the appropriate balance between the maintenance of shoot stem cells and their differentiation into other aboveground plant parts via the control of subcellular localization and intercellular trafficking of STM in the shoot apex. Prevents intracellular trafficking of STM to the plasma membrane in cells in the peripheral shoot meristem region thus facilitating STM recycling to the nucleus to maintain stem cells. May function as a signaling molecule by regulating the trafficking of other regulators. This is FT-interacting protein 4 from Arabidopsis thaliana (Mouse-ear cress).